The following is a 277-amino-acid chain: Diaminopimelate epimerase (277 aa).

Positions 13, 46, and 66 each coordinate substrate. The active-site Proton donor is cysteine 75. Substrate is bound by residues 76-77, asparagine 160, asparagine 193, and 211-212; these read GN and ER. Cysteine 220 (proton acceptor) is an active-site residue. 221 to 222 is a binding site for substrate; sequence GS.

It belongs to the diaminopimelate epimerase family. Homodimer.

It localises to the cytoplasm. The enzyme catalyses (2S,6S)-2,6-diaminopimelate = meso-2,6-diaminopimelate. Its pathway is amino-acid biosynthesis; L-lysine biosynthesis via DAP pathway; DL-2,6-diaminopimelate from LL-2,6-diaminopimelate: step 1/1. Catalyzes the stereoinversion of LL-2,6-diaminopimelate (L,L-DAP) to meso-diaminopimelate (meso-DAP), a precursor of L-lysine and an essential component of the bacterial peptidoglycan. The protein is Diaminopimelate epimerase of Legionella pneumophila (strain Lens).